We begin with the raw amino-acid sequence, 1104 residues long: Collagenase ColA (1104 aa).

Positions 1–39 (MKKNLKRGELTKLKLVERWSATFTLAAFILFNSSFKVLA) are cleaved as a signal peptide. A propeptide spanning residues 40 to 86 (ADKKVENSNNGQITREINADQISKTELNNEVATDNNRPLGPSIAPSR) is cleaved from the precursor. Residues 87 to 761 (ARNNKIYTFD…YVYDVVFHGM (675 aa)) form an S1 metalloprotease domain region. Residues 93–367 (YTFDELNRMN…AANDLDLNFG (275 aa)) form an activator domain region. A catalytic subdomain region spans residues 377–646 (DFNKIKADAR…MDSLLNNIDN (270 aa)). Residue glutamate 477 participates in Ca(2+) binding. Histidine 502 is a binding site for Zn(2+). Glutamate 503 is a catalytic residue. Position 506 (histidine 506) interacts with Zn(2+). Residues glycine 510, valine 514, and glycine 516 each coordinate Ca(2+). Glutamate 534 serves as a coordination point for Zn(2+). A helper subdomain region spans residues 654–767 (DEYVNGHEAK…FHGMNTDTNT (114 aa)). The segment at 762 to 860 (NTDTNTDVHV…KKIKVVEDKP (99 aa)) is S2 domain. Residues asparagine 772, lysine 773, aspartate 800, aspartate 802, aspartate 841, glutamate 866, glutamate 868, asparagine 870, aspartate 894, aspartate 897, glutamate 993, glutamate 995, asparagine 997, leucine 1016, aspartate 1020, lysine 1022, and aspartate 1023 each contribute to the Ca(2+) site. The region spanning 774–862 (EPKAVIKSDS…IKVVEDKPVE (89 aa)) is the PKD domain. Positions 865 to 979 (NESEPNNDFE…TYTVNVKGNL (115 aa)) are S3a collagen-binding domain. Positions 992–1104 (KEVENNNDFD…GNYIVNLQNK (113 aa)) are S3b collagen-binding domain.

Belongs to the peptidase M9B family. Collagenase subfamily. It depends on Ca(2+) as a cofactor. The cofactor is Zn(2+).

The protein resides in the secreted. The catalysed reaction is Digestion of native collagen in the triple helical region at Xaa-|-Gly bonds. With synthetic peptides, a preference is shown for Gly at P3 and P1', Pro and Ala at P2 and P2', and hydroxyproline, Ala or Arg at P3'.. Clostridial collagenases are among the most efficient degraders of eukaryotic collagen known; saprophytes use collagen as a carbon source while pathogens additionally digest collagen to aid in host colonization. Has both tripeptidylcarboxypeptidase on Gly-X-Y and endopeptidase activities; the endopeptidase cuts within the triple helix region of collagen while tripeptidylcarboxypeptidase successively digests the exposed ends, thus clostridial collagenases can digest large sections of collagen. The protein is Collagenase ColA (colA) of Clostridium perfringens (strain 13 / Type A).